Here is a 282-residue protein sequence, read N- to C-terminus: Eukaryotic translation initiation factor 3 subunit G (282 aa).

The interval 1–27 (MSSSKSLDWADDEDYGTGLPSIQTFDN) is disordered. Phosphoserine occurs at positions 160 and 164. One can recognise an RRM domain in the interval 202–280 (ATLRVTNLSD…LILRCEFSKP (79 aa)).

The protein belongs to the eIF-3 subunit G family. Component of the eukaryotic translation initiation factor 3 (eIF-3) complex. The eIF-3 complex appears to include tif32/eif3a, SPAC25G10.08/eif3b, tif33/eif3c, SPBC4C3.07/eif3f, tif35/eif3g and sum1/eif3i. This set of common subunits may also associate exclusively with either moe1/eif3d and int6/eif3e, or with SPAC821.05/eif3h and SPAC1751.03/eif3m. The eIF-3 complex may also include SPAC3A12.13c/eif3j.

It localises to the cytoplasm. Functionally, RNA-binding component of the eukaryotic translation initiation factor 3 (eIF-3) complex, which is involved in protein synthesis of a specialized repertoire of mRNAs and, together with other initiation factors, stimulates binding of mRNA and methionyl-tRNAi to the 40S ribosome. The eIF-3 complex specifically targets and initiates translation of a subset of mRNAs involved in cell proliferation. This subunit can bind 18S rRNA. The chain is Eukaryotic translation initiation factor 3 subunit G (tif35) from Schizosaccharomyces pombe (strain 972 / ATCC 24843) (Fission yeast).